The chain runs to 484 residues: MSNTTVVPSTAGPGPSGGPGGGGGGGGGGGGTEVIQVTNVSPSASSEQMRTLFGFLGKIDELRLFPPDDSPLPVSSRVCFVKFHDPDSAVVAQHLTNTVFVDRALIVVPYAEGVIPDEAKALSLLAPANAVAGLLPGGGLLPTPNPLTQIGAVPLAALGAPTLDPALAALGLPGANLNSQSLAADQLLKLMSTVDPKLNHVAAGLVSPSLKSDTSSKEIEEAMKRVREAQSLISAAIEPDKKEEKRRHSRSRSRSRRRRTPSSSRHRRSRSRSRRRSHSKSRSRRRSKSPRRRRSHSRERGRRSRSTSKTRDKKKEDKEKKRSKTPPKSYSTARRSRSASRERRRRRSRSGTRSPKKPRSPKRKLSRSPSPRRHKKEKKKDKDKERSRDERERSTSKKKKSKDKEKDRERKSESDKDVKQVTRDYDEEEQGYDSEKEKKEEKKPIETGSPKTKECSVEKGTGDSLRESKVNGDDHHEEDMDMSD.

Residues 1-33 (MSNTTVVPSTAGPGPSGGPGGGGGGGGGGGGTE) are disordered. S2 carries the N-acetylserine modification. Residues 14-32 (GPSGGPGGGGGGGGGGGGT) show a composition bias toward gly residues. An RRM domain is found at 33 to 113 (EVIQVTNVSP…ALIVVPYAEG (81 aa)). Residue K197 forms a Glycyl lysine isopeptide (Lys-Gly) (interchain with G-Cter in SUMO2) linkage. Phosphoserine is present on S207. K211 participates in a covalent cross-link: Glycyl lysine isopeptide (Lys-Gly) (interchain with G-Cter in SUMO2). S212 bears the Phosphoserine mark. Positions 233–484 (ISAAIEPDKK…HHEEDMDMSD (252 aa)) are disordered. Residues 244-308 (EKRRHSRSRS…ERGRRSRSTS (65 aa)) are compositionally biased toward basic residues. 10 consecutive repeat copies span residues 247-255 (RHSRSRSRS), 258-265 (RRTPSSSR), 267-274 (RRSRSRSR), 275-282 (RRSHSKSR), 285-292 (RRSKSPRR), 293-300 (RRSHSRER), 302-309 (RRSRSTSK), 321-328 (KRSKTPPK), 334-341 (RRSRSASR), and 346-353 (RRSRSGTR). The interval 247–353 (RHSRSRSRSR…RRRRSRSGTR (107 aa)) is 10 X 8 AA approximate repeats of R-R-S-R-S-R-S-R. Basic and acidic residues predominate over residues 309–320 (KTRDKKKEDKEK). Residue S323 is modified to Phosphoserine. Phosphothreonine is present on T325. Residues 334-379 (RRSRSASRERRRRRSRSGTRSPKKPRSPKRKLSRSPSPRRHKKEKK) are compositionally biased toward basic residues. 3 stretches are compositionally biased toward basic and acidic residues: residues 380–395 (KDKDKERSRDERERST), 402–424 (KDKEKDRERKSESDKDVKQVTRD), and 433–478 (DSEK…HHEE). Phosphoserine is present on residues S414 and S434. Residue T447 is modified to Phosphothreonine. Phosphoserine occurs at positions 449, 456, 464, and 483.

The protein belongs to the splicing factor SR family. Interacts with PUF60.

The protein localises to the nucleus. Functionally, may function in pre-mRNA splicing. In Homo sapiens (Human), this protein is Serine/arginine-rich splicing factor 11 (SRSF11).